The chain runs to 240 residues: Aliphatic sulfonates import ATP-binding protein SsuB 2 (240 aa).

Residues valine 2 to alanine 218 enclose the ABC transporter domain. Glycine 34–serine 41 is an ATP binding site.

This sequence belongs to the ABC transporter superfamily. Aliphatic sulfonates importer (TC 3.A.1.17.2) family. The complex is composed of two ATP-binding proteins (SsuB), two transmembrane proteins (SsuC) and a solute-binding protein (SsuA).

The protein localises to the cell membrane. It carries out the reaction ATP + H2O + aliphatic sulfonate-[sulfonate-binding protein]Side 1 = ADP + phosphate + aliphatic sulfonateSide 2 + [sulfonate-binding protein]Side 1.. Functionally, part of the ABC transporter complex SsuABC involved in aliphatic sulfonates import. Responsible for energy coupling to the transport system. This is Aliphatic sulfonates import ATP-binding protein SsuB 2 from Nocardia farcinica (strain IFM 10152).